Here is a 227-residue protein sequence, read N- to C-terminus: Large ribosomal subunit protein uL10c (227 aa).

The N-terminal 47 residues, M1–S47, are a transit peptide targeting the chloroplast.

It belongs to the universal ribosomal protein uL10 family. Part of the 50S ribosomal subunit.

The protein localises to the plastid. It is found in the chloroplast. Its function is as follows. This protein binds directly to 23S ribosomal RNA. The protein is Large ribosomal subunit protein uL10c (RPL10) of Nicotiana tabacum (Common tobacco).